We begin with the raw amino-acid sequence, 279 residues long: Dermonecrotic toxin LspiSicTox-betaIE3ii (279 aa).

The active site involves His-5. Glu-25 and Asp-27 together coordinate Mg(2+). His-41 serves as the catalytic Nucleophile. Intrachain disulfides connect Cys-45–Cys-51 and Cys-47–Cys-190. Mg(2+) is bound at residue Asp-85.

Belongs to the arthropod phospholipase D family. Class II subfamily. Mg(2+) is required as a cofactor. As to expression, expressed by the venom gland.

Its subcellular location is the secreted. It catalyses the reaction an N-(acyl)-sphingosylphosphocholine = an N-(acyl)-sphingosyl-1,3-cyclic phosphate + choline. It carries out the reaction an N-(acyl)-sphingosylphosphoethanolamine = an N-(acyl)-sphingosyl-1,3-cyclic phosphate + ethanolamine. The enzyme catalyses a 1-acyl-sn-glycero-3-phosphocholine = a 1-acyl-sn-glycero-2,3-cyclic phosphate + choline. The catalysed reaction is a 1-acyl-sn-glycero-3-phosphoethanolamine = a 1-acyl-sn-glycero-2,3-cyclic phosphate + ethanolamine. In terms of biological role, dermonecrotic toxins cleave the phosphodiester linkage between the phosphate and headgroup of certain phospholipids (sphingolipid and lysolipid substrates), forming an alcohol (often choline) and a cyclic phosphate. This toxin acts on sphingomyelin (SM). It may also act on ceramide phosphoethanolamine (CPE), lysophosphatidylcholine (LPC) and lysophosphatidylethanolamine (LPE), but not on lysophosphatidylserine (LPS), and lysophosphatidylglycerol (LPG). It acts by transphosphatidylation, releasing exclusively cyclic phosphate products as second products. Induces dermonecrosis, hemolysis, increased vascular permeability, edema, inflammatory response, and platelet aggregation. The polypeptide is Dermonecrotic toxin LspiSicTox-betaIE3ii (Loxosceles spinulosa (Recluse spider)).